We begin with the raw amino-acid sequence, 352 residues long: Thrombopoietin (352 aa).

A signal peptide spans 1–23 (MELTELLLVVMLLLTARLDPCLP). 2 cysteine pairs are disulfide-bonded: Cys-28–Cys-172 and Cys-50–Cys-106. 5 N-linked (GlcNAc...) asparagine glycosylation sites follow: Asn-185, Asn-197, Asn-206, Asn-234, and Asn-255. Positions 233–245 (LNQTSRSLNQTPG) are enriched in polar residues. Disordered stretches follow at residues 233-259 (LNQT…GTHG) and 292-352 (YSPS…SQEE). Pro residues predominate over residues 311 to 327 (PTSPTPQNPLQPPPPDP). N-linked (GlcNAc...) asparagine glycans are attached at residues Asn-332 and Asn-347.

This sequence belongs to the EPO/TPO family.

It localises to the secreted. Its function is as follows. Lineage-specific cytokine affecting the proliferation and maturation of megakaryocytes from their committed progenitor cells. It acts at a late stage of megakaryocyte development. It may be the major physiological regulator of circulating platelets. This Canis lupus familiaris (Dog) protein is Thrombopoietin (THPO).